The following is a 250-amino-acid chain: MHRGKGMKFVGDSRIPAVRKPNIPKDYSEYPGKTEVFWPNFLLKEWLVGSVFLVGFLCLTVAHPSPLERIADPTDTTYIPLPDWYFLFLYQLLKYSYASGPYTVIGAIVMPGLAFGALLLAPFLDRGPERRPWKRPVATGMMLLTLAAIVYLTWESVVTHDWEKAAEQGKIRAEVEIDTNAEGYKIAQANTCTSCHGENLSGGAGPSLVGTGLTAEEIAKIAKEGQGSMPGGIFKGTDEELQKMANSSPA.

3 consecutive transmembrane segments (helical) span residues 46–62, 104–124, and 137–157; these read WLVGSVFLVGFLCLTVA, VIGAIVMPGLAFGALLLAPFL, and VATGMMLLTLAAIVYLTWESV. A Cytochrome c domain is found at 178-250; it reads DTNAEGYKIA…LQKMANSSPA (73 aa). Residues C192, C195, and H196 each contribute to the heme c site. The tract at residues 229 to 250 is disordered; sequence MPGGIFKGTDEELQKMANSSPA.

Belongs to the cytochrome b family. The main subunits of the menaquinol:cytochrome c complex are a Rieske-type iron-sulfur protein (QcrA), a cytochrome b (QcrB) and a cytochrome c (QcrC). Requires heme c as cofactor.

The protein localises to the cell membrane. Component of the menaquinol:cytochrome c reductase complex. This Geobacillus thermodenitrificans protein is Menaquinol:cytochrome c reductase cytochrome c subunit (qcrC).